Reading from the N-terminus, the 340-residue chain is Solute-binding protein Dde_0634 (340 aa).

The N-terminal stretch at 1–29 (MKSTFAALLIMVGCLVSGALLTGSEAAAA) is a signal peptide. Residues Y99, R172, 210-213 (TSLD), and Y235 each bind (indol-3-yl)acetate.

It belongs to the bacterial solute-binding protein 7 family. The complex is comprised of an extracytoplasmic solute-binding protein and a heteromeric permease formed by two transmembrane proteins.

It is found in the periplasm. Functionally, solute-binding protein that binds indole-3-pyruvate and indole-3-acetate (in vitro). Can also bind D-tryptophan (in vitro), but that is probably not a physiological ligand. Probably part of a tripartite ATP-independent periplasmic (TRAP) transport system that mediates solute transport into the cytoplasm. This Oleidesulfovibrio alaskensis (strain ATCC BAA-1058 / DSM 17464 / G20) (Desulfovibrio alaskensis) protein is Solute-binding protein Dde_0634.